Here is a 385-residue protein sequence, read N- to C-terminus: ATP phosphoribosyltransferase regulatory subunit (385 aa).

This sequence belongs to the class-II aminoacyl-tRNA synthetase family. HisZ subfamily. Heteromultimer composed of HisG and HisZ subunits.

It localises to the cytoplasm. The protein operates within amino-acid biosynthesis; L-histidine biosynthesis; L-histidine from 5-phospho-alpha-D-ribose 1-diphosphate: step 1/9. In terms of biological role, required for the first step of histidine biosynthesis. May allow the feedback regulation of ATP phosphoribosyltransferase activity by histidine. The chain is ATP phosphoribosyltransferase regulatory subunit from Lysinibacillus sphaericus (strain C3-41).